A 205-amino-acid chain; its full sequence is Methylthioribulose-1-phosphate dehydratase (205 aa).

Zn(2+) contacts are provided by His-96 and His-98.

The protein belongs to the aldolase class II family. MtnB subfamily. Requires Zn(2+) as cofactor.

It catalyses the reaction 5-(methylsulfanyl)-D-ribulose 1-phosphate = 5-methylsulfanyl-2,3-dioxopentyl phosphate + H2O. It participates in amino-acid biosynthesis; L-methionine biosynthesis via salvage pathway; L-methionine from S-methyl-5-thio-alpha-D-ribose 1-phosphate: step 2/6. In terms of biological role, catalyzes the dehydration of methylthioribulose-1-phosphate (MTRu-1-P) into 2,3-diketo-5-methylthiopentyl-1-phosphate (DK-MTP-1-P). This chain is Methylthioribulose-1-phosphate dehydratase, found in Pseudomonas paraeruginosa (strain DSM 24068 / PA7) (Pseudomonas aeruginosa (strain PA7)).